The following is a 643-amino-acid chain: Sodium-dependent nutrient amino acid transporter 1 (643 aa).

The interval 1–38 is disordered; it reads MELKGVQPSNGSPNGNGNGATNAASTEKTDAEKPTAER. The Cytoplasmic segment spans residues 1–40; the sequence is MELKGVQPSNGSPNGNGNGATNAASTEKTDAEKPTAERTN. Residues 8 to 26 are compositionally biased toward low complexity; it reads PSNGSPNGNGNGATNAAST. Basic and acidic residues predominate over residues 27–36; it reads EKTDAEKPTA. Helical transmembrane passes span 41-61, 74-94, and 111-131; these read WGNG…LGNV, GAFL…MYYL, and SVVP…ICII. Asn185, Asn190, and Asn200 each carry an N-linked (GlcNAc...) asparagine glycan. Transmembrane regions (helical) follow at residues 231-251, 260-280, 309-329, 343-363, 403-423, 449-469, 476-496, 518-538, and 554-574; these read PDWK…LVIM, AAYF…IRAV, AVVQ…MFAS, IVTT…FAIL, LFSV…IVAL, VCGF…ILTL, TYVV…VYGL, CWSF…MATI, and VAGW…GLWY.

The protein belongs to the sodium:neurotransmitter symporter (SNF) (TC 2.A.22) family.

The protein resides in the membrane. Functionally, unusual broad substrate spectrum amino acid:sodium cotransporter that promotes absorption of the D isomers of essential amino acids. Neutral amino acids are the preferred substrates, especially methionine and phenylalanine. The polypeptide is Sodium-dependent nutrient amino acid transporter 1 (Drosophila simulans (Fruit fly)).